Here is a 753-residue protein sequence, read N- to C-terminus: Pesticidal crystal protein Cry20Aa (753 aa).

Over residues 680 to 696 the composition is skewed to polar residues; it reads DTTYQPSYDNYNQNASG. The interval 680-721 is disordered; the sequence is DTTYQPSYDNYNQNASGTYDDGYNPNASDSYDQSYTNNYSQN. Residues 712–721 show a composition bias toward low complexity; that stretch reads QSYTNNYSQN.

This sequence belongs to the delta endotoxin family. Has low mosquitocidal activity probably due to rapid proteolysis to inactive 56 kDa and 43 kDa proteins.

Functionally, promotes colloidosmotic lysis by binding to the midgut epithelial cells of mosquitos. Active against Aedes aegypti and Culex quinquefasciatus larvae. The polypeptide is Pesticidal crystal protein Cry20Aa (cry20Aa) (Bacillus thuringiensis subsp. fukuokaensis).